The primary structure comprises 89 residues: Small ribosomal subunit protein uS15 (89 aa).

The protein belongs to the universal ribosomal protein uS15 family. In terms of assembly, part of the 30S ribosomal subunit. Forms a bridge to the 50S subunit in the 70S ribosome, contacting the 23S rRNA.

In terms of biological role, one of the primary rRNA binding proteins, it binds directly to 16S rRNA where it helps nucleate assembly of the platform of the 30S subunit by binding and bridging several RNA helices of the 16S rRNA. Functionally, forms an intersubunit bridge (bridge B4) with the 23S rRNA of the 50S subunit in the ribosome. The chain is Small ribosomal subunit protein uS15 from Chloroherpeton thalassium (strain ATCC 35110 / GB-78).